The chain runs to 326 residues: MSTTFRGKKEEEEEEEEEKEEKEEELFNPFKEEFLEEGKTVSEEINNPFEEEEEEEIPNPFEVETNYLPEIDKLLMLYQKGFIDKDMVDLASKILGIELDLGDYKQIGKSLIKVPIIIIAKPSHFGEIKQEIPEAEIADPYSKKYPIISLLSLEKTINTLTNAKMPWKRFSIFIDASYTTDIPQSAVALLNGLIDILRKAGYDVKLYTKYGEEPITLDEESASRFVSMENPNLAKILCHAKKVQGLDKTCDDSRWWEYDLWGNRKKNVIDQDKVRQIALKYNVSPVLVRYIANSIGNPRSLRRYAESFNVPEQLVMDIAKELSSSS.

The segment at 1–28 is disordered; it reads MSTTFRGKKEEEEEEEEEKEEKEEELFN. A compositionally biased stretch (acidic residues) spans 11–26; it reads EEEEEEEEKEEKEEEL.

The protein localises to the virion. The protein is Structural protein ORF326a of Acidianus two-tailed virus (ATV).